A 129-amino-acid polypeptide reads, in one-letter code: Snaclec rhodocetin subunit beta (129 aa).

Residues 3–125 enclose the C-type lectin domain; it reads RCPTTWSASK…EEKNAFLCKF (123 aa). 3 cysteine pairs are disulfide-bonded: cysteine 4/cysteine 15, cysteine 32/cysteine 123, and cysteine 98/cysteine 115.

In terms of assembly, heterotetramer of subunit alpha, beta, gamma and delta; only the gamma and the delta subunits are disulfide-linked. Alpha-beta heterodimer and gamma-delta heterodimer associate orthogonally, giving a cruciform conformation. This heterotetramer may covalently dimerizes thanks to the gamma subunit. Expressed by the venom gland.

The protein resides in the secreted. Its function is as follows. Potent inhibitor of collagen-induced platelet aggregation. It acts by binding to the integrin alpha2A domain and blocks collagen binding to integrin alpha-2/beta-1 (ITGA2/ITGB1). The gamma/delta subunits mainly contribute to this activity. This is Snaclec rhodocetin subunit beta from Calloselasma rhodostoma (Malayan pit viper).